The chain runs to 462 residues: Hydroxymethylglutaryl-CoA synthase (462 aa).

The active-site Proton donor/acceptor is glutamate 86. Cysteine 120 acts as the Acyl-thioester intermediate in catalysis. Cysteine 120, threonine 211, histidine 261, lysine 270, asparagine 338, and serine 372 together coordinate (3S)-3-hydroxy-3-methylglutaryl-CoA. Histidine 261 functions as the Proton donor/acceptor in the catalytic mechanism.

The protein belongs to the thiolase-like superfamily. HMG-CoA synthase family.

The enzyme catalyses acetoacetyl-CoA + acetyl-CoA + H2O = (3S)-3-hydroxy-3-methylglutaryl-CoA + CoA + H(+). The protein operates within siderophore biosynthesis. Functionally, hydroxymethylglutaryl-CoA synthase involved in the biosynthesis of siderophore ferrichrome A which is contributing to organismal virulence. The first step of ferrichrome A biosynthesis is performed by the HMG-CoA synthase hcs1 which catalyzes the generation of HMG-CoA and CoA using acetoacetyl-CoA and acetyl-CoA as substrates. The enoyl-CoA isomerase/hydratase fer4 then catalyzes the conversion of hcs1-produced HMG-CoA to methylglutaconyl-CoA. The acyltransferase fer5 then fuses the fer4-generated methylglutaconyl-CoA with sid1-generated hydroxyornithine to yield methylglutaconyl hydroxyornithine. Methylglutaconyl hydroxyornithine is then available for use by the NRPS fer3 to generate ferrichrome A. The sequence is that of Hydroxymethylglutaryl-CoA synthase from Mycosarcoma maydis (Corn smut fungus).